Consider the following 808-residue polypeptide: Protein tortoise (808 aa).

The stretch at 43–78 forms a coiled coil; that stretch reads KDRKELYSLNNDSIKKKLNQLKDETNQLLKERGEEL. The interval 152-171 is disordered; it reads LTSGGANKKKSPFLEDNNNK. Positions 694 to 733 form a coiled coil; it reads EDLDFQIEELELMIKNKKILEREIKAHNEKISKIIKDSRD.

Its subcellular location is the mitochondrion. Functionally, required for efficient chemotaxis. The chain is Protein tortoise (torA) from Dictyostelium discoideum (Social amoeba).